A 324-amino-acid polypeptide reads, in one-letter code: Adenine deaminase (324 aa).

Residues His-11, His-13, and His-189 each coordinate Zn(2+). Glu-192 functions as the Proton donor in the catalytic mechanism. Asp-270 provides a ligand contact to Zn(2+). Asp-271 contributes to the substrate binding site.

Belongs to the metallo-dependent hydrolases superfamily. Adenosine and AMP deaminases family. Adenine deaminase type 2 subfamily. Zn(2+) serves as cofactor.

It carries out the reaction adenine + H2O + H(+) = hypoxanthine + NH4(+). Its function is as follows. Catalyzes the hydrolytic deamination of adenine to hypoxanthine. Plays an important role in the purine salvage pathway and in nitrogen catabolism. This is Adenine deaminase from Rhizobium meliloti (strain 1021) (Ensifer meliloti).